We begin with the raw amino-acid sequence, 565 residues long: Proline--tRNA ligase (565 aa).

The protein belongs to the class-II aminoacyl-tRNA synthetase family. ProS type 1 subfamily. As to quaternary structure, homodimer.

The protein localises to the cytoplasm. The catalysed reaction is tRNA(Pro) + L-proline + ATP = L-prolyl-tRNA(Pro) + AMP + diphosphate. Catalyzes the attachment of proline to tRNA(Pro) in a two-step reaction: proline is first activated by ATP to form Pro-AMP and then transferred to the acceptor end of tRNA(Pro). As ProRS can inadvertently accommodate and process non-cognate amino acids such as alanine and cysteine, to avoid such errors it has two additional distinct editing activities against alanine. One activity is designated as 'pretransfer' editing and involves the tRNA(Pro)-independent hydrolysis of activated Ala-AMP. The other activity is designated 'posttransfer' editing and involves deacylation of mischarged Ala-tRNA(Pro). The misacylated Cys-tRNA(Pro) is not edited by ProRS. The chain is Proline--tRNA ligase from Francisella tularensis subsp. tularensis (strain FSC 198).